A 226-amino-acid polypeptide reads, in one-letter code: N-acetyltransferase family 8 member 2 (226 aa).

A run of 2 helical transmembrane segments spans residues 33–55 (FYHV…TIIL) and 60–82 (WLLA…WVSC). The N-acetyltransferase domain maps to 69–221 (LFLLCLRLIF…FHFTYSLPSV (153 aa)). Lys204 bears the N6-acetyllysine mark.

This sequence belongs to the camello family.

It is found in the membrane. Functionally, probable acetyltransferase. Has no detectable histone acetyltransferase activity towards histone H3 or H4. The sequence is that of N-acetyltransferase family 8 member 2 from Rattus norvegicus (Rat).